The primary structure comprises 252 residues: Homeobox protein EMX2 (252 aa).

The homeobox DNA-binding region spans 154–213; sequence PKRIRTAFSPSQLLRLEHAFEKNHYVVGAERKQLAHSLSLTETQVKVWFQNRRTKFKRQK. Residues 212 to 252 are disordered; it reads QKLEEEGSDSQQKKKGTHHINRWRIATKQASPEEIDVTSDD. Residues 224-233 show a composition bias toward basic residues; that stretch reads KKKGTHHINR.

The protein belongs to the EMX homeobox family. As to quaternary structure, interacts with translation initiation factor EIF4E. Cerebral cortex.

It is found in the nucleus. It localises to the cell projection. The protein localises to the axon. Transcription factor, which in cooperation with EMX1, acts to generate the boundary between the roof and archipallium in the developing brain. May function in combination with OTX1/2 to specify cell fates in the developing central nervous system. In the inner ear, it controls the distribution of GPR156 at hair cell boundaries, and regulates the organization of stereociliary bundles in opposite orientations across the line of polarity reversal (LPR). This is Homeobox protein EMX2 (EMX2) from Homo sapiens (Human).